The primary structure comprises 314 residues: 2,3-dihydroxyphenylpropionate/2,3-dihydroxicinnamic acid 1,2-dioxygenase (314 aa).

Histidine 115 (proton donor) is an active-site residue. The active-site Proton acceptor is the histidine 179.

This sequence belongs to the LigB/MhpB extradiol dioxygenase family. As to quaternary structure, homotetramer. Requires Fe(2+) as cofactor.

It catalyses the reaction 3-(2,3-dihydroxyphenyl)propanoate + O2 = (2Z,4E)-2-hydroxy-6-oxonona-2,4-dienedioate + H(+). The enzyme catalyses (2E)-3-(2,3-dihydroxyphenyl)prop-2-enoate + O2 = (2Z,4E,7E)-2-hydroxy-6-oxonona-2,4,7-trienedioate + H(+). The protein operates within aromatic compound metabolism; 3-phenylpropanoate degradation. Functionally, catalyzes the non-heme iron(II)-dependent oxidative cleavage of 2,3-dihydroxyphenylpropionic acid and 2,3-dihydroxicinnamic acid into 2-hydroxy-6-ketononadienedioate and 2-hydroxy-6-ketononatrienedioate, respectively. This Escherichia coli O157:H7 protein is 2,3-dihydroxyphenylpropionate/2,3-dihydroxicinnamic acid 1,2-dioxygenase.